We begin with the raw amino-acid sequence, 150 residues long: uncharacterized protein (150 aa).

An N-terminal signal peptide occupies residues 1 to 28 (MPLDVWIAFSYFIDFFQWLFMLNAEVMR).

This is an uncharacterized protein from Archaeoglobus fulgidus (strain ATCC 49558 / DSM 4304 / JCM 9628 / NBRC 100126 / VC-16).